A 147-amino-acid polypeptide reads, in one-letter code: Ubiquitin-conjugating enzyme E2 4 (147 aa).

The UBC core domain maps to 1 to 147 (MSLKRINKEL…AKEWTKKYAV (147 aa)). The active-site Glycyl thioester intermediate is the cysteine 85.

It belongs to the ubiquitin-conjugating enzyme family.

The catalysed reaction is S-ubiquitinyl-[E1 ubiquitin-activating enzyme]-L-cysteine + [E2 ubiquitin-conjugating enzyme]-L-cysteine = [E1 ubiquitin-activating enzyme]-L-cysteine + S-ubiquitinyl-[E2 ubiquitin-conjugating enzyme]-L-cysteine.. Its pathway is protein modification; protein ubiquitination. In terms of biological role, E2 ubiquitin-conjugating enzyme that catalyzes the covalent attachment of ubiquitin to other proteins. Mediates the selective degradation of short-lived and abnormal proteins. Mediates ubiquitination of PEX5. This Candida albicans (Yeast) protein is Ubiquitin-conjugating enzyme E2 4 (UBC4).